Consider the following 296-residue polypeptide: tRNA dimethylallyltransferase (296 aa).

Residue 2–9 (GPTASGKT) coordinates ATP. 4 to 9 (TASGKT) is a binding site for substrate. 3 interaction with substrate tRNA regions span residues 27-30 (DSAL), 151-155 (QRLSR), and 232-237 (RCVGYR).

It belongs to the IPP transferase family. In terms of assembly, monomer. The cofactor is Mg(2+).

The catalysed reaction is adenosine(37) in tRNA + dimethylallyl diphosphate = N(6)-dimethylallyladenosine(37) in tRNA + diphosphate. Its function is as follows. Catalyzes the transfer of a dimethylallyl group onto the adenine at position 37 in tRNAs that read codons beginning with uridine, leading to the formation of N6-(dimethylallyl)adenosine (i(6)A). The polypeptide is tRNA dimethylallyltransferase (Shewanella sp. (strain MR-4)).